A 450-amino-acid polypeptide reads, in one-letter code: WD repeat-containing protein ATCSA-1 (450 aa).

WD repeat units lie at residues 41 to 81, 101 to 141, 148 to 185, and 188 to 228; these read PHRG…DYEA, GHKY…AVVD, VYRT…FSHT, and GHRD…CFRV. Residues 269–298 are disordered; the sequence is LQSKQTGSQSVKGSSSAKASVEKSRQKRIH. Positions 271–287 are enriched in low complexity; that stretch reads SKQTGSQSVKGSSSAKA. WD repeat units lie at residues 310–349 and 397–436; these read AHYG…NTLV and GHYE…EDEM.

Interacts with DDB1A. As to expression, expressed in roots, leaves, stems, flowers and siliques.

It localises to the nucleus. In terms of biological role, involved in UV-B tolerance and genome integrity. In association with DDB2, is necessary for repair of UV-B-induced DNA lesions. This Arabidopsis thaliana (Mouse-ear cress) protein is WD repeat-containing protein ATCSA-1.